Consider the following 118-residue polypeptide: UPF0342 protein LCK_01004 (118 aa).

The protein belongs to the UPF0342 family.

This chain is UPF0342 protein LCK_01004, found in Leuconostoc citreum (strain KM20).